A 364-amino-acid polypeptide reads, in one-letter code: MGSSFGDLFRISTFGESHGGGVGVIVEGCPPRLNLSVESIQAELDRRKPGQSHITTPRKEADQVQVLSGLLDGETTLGTPIAMVVRNKDQRPGDYKDMAVAFRPSHADATYQAKYGIQARSGGGRASARETIGRVAAGAIAKQLLKQAAGTEILAWVKRIHNIEASGIDPQRVQLSDVEANIVRCPESAVAERMVERIEAIGREGDSCGGVIECVVRHPAVGLGMPVFDKLEADLAKAVMSLPATKGFEIGSGFDGTLLKGSEHNDAFLPSDDGRLKTATNNSGGIQGGISNGEPIVIRVAFKPTATIRKEQQTIDSDGKATTLAGKGRHDPCVLPRAVPMVEAMVALVLADHLLRQQGQCSLW.

NADP(+) is bound at residue Arg47. Residues 125 to 127 (RAS), Gly288, 303 to 307 (KPTAT), and Arg329 contribute to the FMN site.

Belongs to the chorismate synthase family. Homotetramer. It depends on FMNH2 as a cofactor.

The enzyme catalyses 5-O-(1-carboxyvinyl)-3-phosphoshikimate = chorismate + phosphate. Its pathway is metabolic intermediate biosynthesis; chorismate biosynthesis; chorismate from D-erythrose 4-phosphate and phosphoenolpyruvate: step 7/7. Functionally, catalyzes the anti-1,4-elimination of the C-3 phosphate and the C-6 proR hydrogen from 5-enolpyruvylshikimate-3-phosphate (EPSP) to yield chorismate, which is the branch point compound that serves as the starting substrate for the three terminal pathways of aromatic amino acid biosynthesis. This reaction introduces a second double bond into the aromatic ring system. This chain is Chorismate synthase, found in Synechococcus sp. (strain CC9605).